The primary structure comprises 600 residues: Dihydroxy-acid dehydratase (600 aa).

Asp-82 lines the Mg(2+) pocket. Cys-123 lines the [2Fe-2S] cluster pocket. 2 residues coordinate Mg(2+): Asp-124 and Lys-125. Lys-125 bears the N6-carboxylysine mark. Cys-192 is a binding site for [2Fe-2S] cluster. Glu-489 provides a ligand contact to Mg(2+). The active-site Proton acceptor is the Ser-515.

It belongs to the IlvD/Edd family. As to quaternary structure, homodimer. The cofactor is [2Fe-2S] cluster. It depends on Mg(2+) as a cofactor.

It catalyses the reaction (2R)-2,3-dihydroxy-3-methylbutanoate = 3-methyl-2-oxobutanoate + H2O. The enzyme catalyses (2R,3R)-2,3-dihydroxy-3-methylpentanoate = (S)-3-methyl-2-oxopentanoate + H2O. It functions in the pathway amino-acid biosynthesis; L-isoleucine biosynthesis; L-isoleucine from 2-oxobutanoate: step 3/4. The protein operates within amino-acid biosynthesis; L-valine biosynthesis; L-valine from pyruvate: step 3/4. Functionally, functions in the biosynthesis of branched-chain amino acids. Catalyzes the dehydration of (2R,3R)-2,3-dihydroxy-3-methylpentanoate (2,3-dihydroxy-3-methylvalerate) into 2-oxo-3-methylpentanoate (2-oxo-3-methylvalerate) and of (2R)-2,3-dihydroxy-3-methylbutanoate (2,3-dihydroxyisovalerate) into 2-oxo-3-methylbutanoate (2-oxoisovalerate), the penultimate precursor to L-isoleucine and L-valine, respectively. The chain is Dihydroxy-acid dehydratase from Bacteroides thetaiotaomicron (strain ATCC 29148 / DSM 2079 / JCM 5827 / CCUG 10774 / NCTC 10582 / VPI-5482 / E50).